The chain runs to 93 residues: YcgL domain-containing protein VSAL_I1068 (93 aa).

In terms of domain architecture, YcgL spans 1–84 (MYCSIYKSSK…PPENLLEKYK (84 aa)).

The polypeptide is YcgL domain-containing protein VSAL_I1068 (Aliivibrio salmonicida (strain LFI1238) (Vibrio salmonicida (strain LFI1238))).